We begin with the raw amino-acid sequence, 78 residues long: Large ribosomal subunit protein bL28 (78 aa).

This sequence belongs to the bacterial ribosomal protein bL28 family.

This is Large ribosomal subunit protein bL28 from Pseudoalteromonas atlantica (strain T6c / ATCC BAA-1087).